A 343-amino-acid chain; its full sequence is Holliday junction branch migration complex subunit RuvB (343 aa).

The interval 4–193 (TDNLTAAQPQ…FGIVSRLEFY (190 aa)) is large ATPase domain (RuvB-L). Residues Leu-32, Arg-33, Gly-74, Lys-77, Thr-78, Thr-79, 140 to 142 (EDY), Arg-183, Tyr-193, and Arg-230 each bind ATP. Thr-78 provides a ligand contact to Mg(2+). The tract at residues 194 to 264 (ENRDLATIVS…IADAALSMLD (71 aa)) is small ATPAse domain (RuvB-S). The segment at 267–343 (VQGLDVMDRK…YLHFGLPVEK (77 aa)) is head domain (RuvB-H). Positions 322 and 327 each coordinate DNA.

It belongs to the RuvB family. In terms of assembly, homohexamer. Forms an RuvA(8)-RuvB(12)-Holliday junction (HJ) complex. HJ DNA is sandwiched between 2 RuvA tetramers; dsDNA enters through RuvA and exits via RuvB. An RuvB hexamer assembles on each DNA strand where it exits the tetramer. Each RuvB hexamer is contacted by two RuvA subunits (via domain III) on 2 adjacent RuvB subunits; this complex drives branch migration. In the full resolvosome a probable DNA-RuvA(4)-RuvB(12)-RuvC(2) complex forms which resolves the HJ.

Its subcellular location is the cytoplasm. The catalysed reaction is ATP + H2O = ADP + phosphate + H(+). Functionally, the RuvA-RuvB-RuvC complex processes Holliday junction (HJ) DNA during genetic recombination and DNA repair, while the RuvA-RuvB complex plays an important role in the rescue of blocked DNA replication forks via replication fork reversal (RFR). RuvA specifically binds to HJ cruciform DNA, conferring on it an open structure. The RuvB hexamer acts as an ATP-dependent pump, pulling dsDNA into and through the RuvAB complex. RuvB forms 2 homohexamers on either side of HJ DNA bound by 1 or 2 RuvA tetramers; 4 subunits per hexamer contact DNA at a time. Coordinated motions by a converter formed by DNA-disengaged RuvB subunits stimulates ATP hydrolysis and nucleotide exchange. Immobilization of the converter enables RuvB to convert the ATP-contained energy into a lever motion, pulling 2 nucleotides of DNA out of the RuvA tetramer per ATP hydrolyzed, thus driving DNA branch migration. The RuvB motors rotate together with the DNA substrate, which together with the progressing nucleotide cycle form the mechanistic basis for DNA recombination by continuous HJ branch migration. Branch migration allows RuvC to scan DNA until it finds its consensus sequence, where it cleaves and resolves cruciform DNA. The chain is Holliday junction branch migration complex subunit RuvB from Neisseria meningitidis serogroup A / serotype 4A (strain DSM 15465 / Z2491).